The chain runs to 170 residues: MALLPILEFPDPRLRTKAALIDAAEVTTPAFQELVDNMFQTMYDAPGIGLAATQVDVHKRFMVIDVSEEKNEPHVFINPEIVAKDGGRVYQEGCLSVPGIFADVTRADTITVKYLDRDGQQQELEAGEVLATCIQHEMDHLDGKLFIDYLSPLKREMVRKKLAKQRKHVA.

The Fe cation site is built by cysteine 94 and histidine 136. Glutamate 137 is a catalytic residue. Position 140 (histidine 140) interacts with Fe cation.

This sequence belongs to the polypeptide deformylase family. Requires Fe(2+) as cofactor.

The catalysed reaction is N-terminal N-formyl-L-methionyl-[peptide] + H2O = N-terminal L-methionyl-[peptide] + formate. Removes the formyl group from the N-terminal Met of newly synthesized proteins. Requires at least a dipeptide for an efficient rate of reaction. N-terminal L-methionine is a prerequisite for activity but the enzyme has broad specificity at other positions. This Stenotrophomonas maltophilia (strain R551-3) protein is Peptide deformylase.